The primary structure comprises 156 residues: Probable succinate transporter subunit YjjB (156 aa).

The next 4 helical transmembrane spans lie at 7–27, 54–74, 86–106, and 128–148; these read WALL…AMVF, FGMN…VIGI, VFTV…TAMI, and FLKA…PGLW.

This sequence belongs to the ThrE exporter (TC 2.A.79) family. In terms of assembly, the transporter is composed of YjjB and YjjP.

It is found in the cell inner membrane. Involved in succinate export with YjjP. Both proteins are required for export. This chain is Probable succinate transporter subunit YjjB, found in Yersinia pseudotuberculosis serotype I (strain IP32953).